A 680-amino-acid chain; its full sequence is Transketolase 1 (680 aa).

Position 30 (His30) interacts with substrate. Residues His69 and 116–118 (GPL) each bind thiamine diphosphate. Asp157 contacts Mg(2+). Thiamine diphosphate contacts are provided by Gly158 and Asn187. Mg(2+) is bound by residues Asn187 and Ile189. His263 is a binding site for substrate. A thiamine diphosphate-binding site is contributed by His263. A phosphoserine mark is found at Ser286 and Ser335. Arg359 and Ser386 together coordinate substrate. Ser402 bears the Phosphoserine mark. Thiamine diphosphate is bound by residues Glu418 and Phe445. Catalysis depends on Glu418, which acts as the Proton donor. Substrate is bound by residues His469 and Asp477. Ser492 bears the Phosphoserine mark. Arg528 serves as a coordination point for substrate. Lys647 participates in a covalent cross-link: Glycyl lysine isopeptide (Lys-Gly) (interchain with G-Cter in ubiquitin).

The protein belongs to the transketolase family. As to quaternary structure, homodimer. Requires Mg(2+) as cofactor. Ca(2+) is required as a cofactor. Mn(2+) serves as cofactor. The cofactor is Co(2+). It depends on thiamine diphosphate as a cofactor.

It catalyses the reaction D-sedoheptulose 7-phosphate + D-glyceraldehyde 3-phosphate = aldehydo-D-ribose 5-phosphate + D-xylulose 5-phosphate. Functionally, catalyzes the transfer of a two-carbon ketol group from a ketose donor to an aldose acceptor, via a covalent intermediate with the cofactor thiamine pyrophosphate. This is Transketolase 1 (TKL1) from Saccharomyces cerevisiae (strain ATCC 204508 / S288c) (Baker's yeast).